Here is a 121-residue protein sequence, read N- to C-terminus: Small ribosomal subunit protein uS11 (121 aa).

This sequence belongs to the universal ribosomal protein uS11 family. In terms of assembly, part of the 30S ribosomal subunit. Interacts with proteins S7 and S18. Binds to IF-3.

In terms of biological role, located on the platform of the 30S subunit, it bridges several disparate RNA helices of the 16S rRNA. Forms part of the Shine-Dalgarno cleft in the 70S ribosome. The chain is Small ribosomal subunit protein uS11 from Mycoplasmoides gallisepticum (strain R(low / passage 15 / clone 2)) (Mycoplasma gallisepticum).